A 382-amino-acid chain; its full sequence is Histidinol-phosphate aminotransferase (382 aa).

The interval 1–24 (MTSAPRPRPTLDDLPLREDLRGKS) is disordered. Residues 9–22 (PTLDDLPLREDLRG) are compositionally biased toward basic and acidic residues. Lysine 233 is modified (N6-(pyridoxal phosphate)lysine).

Belongs to the class-II pyridoxal-phosphate-dependent aminotransferase family. Histidinol-phosphate aminotransferase subfamily. As to quaternary structure, homodimer. Requires pyridoxal 5'-phosphate as cofactor.

It carries out the reaction L-histidinol phosphate + 2-oxoglutarate = 3-(imidazol-4-yl)-2-oxopropyl phosphate + L-glutamate. The protein operates within amino-acid biosynthesis; L-histidine biosynthesis; L-histidine from 5-phospho-alpha-D-ribose 1-diphosphate: step 7/9. The chain is Histidinol-phosphate aminotransferase from Mycobacterium ulcerans (strain Agy99).